We begin with the raw amino-acid sequence, 202 residues long: Probable cobalt-precorrin-6B C(15)-methyltransferase (decarboxylating) (202 aa).

S-adenosyl-L-methionine is bound by residues Thr29, 53-57 (GCGSG), Asp77, and Val106.

It belongs to the methyltransferase superfamily. Archaeal-type CbiT family.

It catalyses the reaction Co-precorrin-6B + S-adenosyl-L-methionine = Co-precorrin-7 + S-adenosyl-L-homocysteine + CO2. It participates in cofactor biosynthesis; adenosylcobalamin biosynthesis; cob(II)yrinate a,c-diamide from sirohydrochlorin (anaerobic route): step 8/10. Catalyzes the methylation of C-15 in cobalt-precorrin-6B followed by the decarboxylation of C-12 to form cobalt-precorrin-7. The chain is Probable cobalt-precorrin-6B C(15)-methyltransferase (decarboxylating) from Thermoplasma acidophilum (strain ATCC 25905 / DSM 1728 / JCM 9062 / NBRC 15155 / AMRC-C165).